The following is a 631-amino-acid chain: 2-isopropylmalate synthase 2, chloroplastic (631 aa).

The transit peptide at 1–46 directs the protein to the chloroplast; sequence MESSILKSPNLSSPSFGVPSIPALSSSSTSPFSSLHLRSQNHRTIS. In terms of domain architecture, Pyruvate carboxyltransferase spans 87–360; that stretch reads VRIFDTTLRD…FTGIDTRHIV (274 aa). 3 residues coordinate a divalent metal cation: aspartate 96, histidine 293, and asparagine 329.

Belongs to the alpha-IPM synthase/homocitrate synthase family. LeuA type 1 subfamily. As to quaternary structure, homotetramer. The cofactor is Mg(2+). It depends on Mn(2+) as a cofactor. As to expression, expressed in roots, stems, leaves, flowers and siliques.

It localises to the plastid. It is found in the chloroplast. The enzyme catalyses 3-methyl-2-oxobutanoate + acetyl-CoA + H2O = (2S)-2-isopropylmalate + CoA + H(+). It functions in the pathway amino-acid biosynthesis; L-leucine biosynthesis; L-leucine from 3-methyl-2-oxobutanoate: step 1/4. With respect to regulation, feedback inhibition by Leu. Catalyzes the condensation of the acetyl group of acetyl-CoA with 3-methyl-2-oxobutanoate (2-oxoisovalerate) to form 3-carboxy-3-hydroxy-4-methylpentanoate (2-isopropylmalate). Involved in Leu biosynthesis, but does not participate in the chain elongation of glucosinolates. This Arabidopsis thaliana (Mouse-ear cress) protein is 2-isopropylmalate synthase 2, chloroplastic.